Consider the following 317-residue polypeptide: Acetyl-coenzyme A carboxylase carboxyl transferase subunit alpha (317 aa).

Residues 40 to 294 (RLQHKSQELT…KQQILADLAE (255 aa)) enclose the CoA carboxyltransferase C-terminal domain.

This sequence belongs to the AccA family. Acetyl-CoA carboxylase is a heterohexamer composed of biotin carboxyl carrier protein (AccB), biotin carboxylase (AccC) and two subunits each of ACCase subunit alpha (AccA) and ACCase subunit beta (AccD).

It localises to the cytoplasm. The catalysed reaction is N(6)-carboxybiotinyl-L-lysyl-[protein] + acetyl-CoA = N(6)-biotinyl-L-lysyl-[protein] + malonyl-CoA. It participates in lipid metabolism; malonyl-CoA biosynthesis; malonyl-CoA from acetyl-CoA: step 1/1. Its function is as follows. Component of the acetyl coenzyme A carboxylase (ACC) complex. First, biotin carboxylase catalyzes the carboxylation of biotin on its carrier protein (BCCP) and then the CO(2) group is transferred by the carboxyltransferase to acetyl-CoA to form malonyl-CoA. The sequence is that of Acetyl-coenzyme A carboxylase carboxyl transferase subunit alpha from Haemophilus ducreyi (strain 35000HP / ATCC 700724).